The primary structure comprises 611 residues: 4-hydroxy-3-methylbut-2-en-1-yl diphosphate synthase (flavodoxin) (611 aa).

[4Fe-4S] cluster-binding residues include Cys520, Cys523, Cys554, and Glu561.

This sequence belongs to the IspG family. [4Fe-4S] cluster serves as cofactor.

The catalysed reaction is (2E)-4-hydroxy-3-methylbut-2-enyl diphosphate + oxidized [flavodoxin] + H2O + 2 H(+) = 2-C-methyl-D-erythritol 2,4-cyclic diphosphate + reduced [flavodoxin]. The protein operates within isoprenoid biosynthesis; isopentenyl diphosphate biosynthesis via DXP pathway; isopentenyl diphosphate from 1-deoxy-D-xylulose 5-phosphate: step 5/6. Functionally, converts 2C-methyl-D-erythritol 2,4-cyclodiphosphate (ME-2,4cPP) into 1-hydroxy-2-methyl-2-(E)-butenyl 4-diphosphate. In Parabacteroides distasonis (strain ATCC 8503 / DSM 20701 / CIP 104284 / JCM 5825 / NCTC 11152), this protein is 4-hydroxy-3-methylbut-2-en-1-yl diphosphate synthase (flavodoxin).